Reading from the N-terminus, the 210-residue chain is Vacuolar protein sorting-associated protein 28 homolog (210 aa).

In terms of domain architecture, VPS28 N-terminal spans 1–106; that stretch reads MSSQNANLMR…REGRPITVKD (106 aa). The 97-residue stretch at 110-206 folds into the VPS28 C-terminal domain; sequence NVLKHIASIV…AYQAFNKALN (97 aa).

Belongs to the VPS28 family. As to quaternary structure, component of the ESCRT-I complex (endosomal sorting complex required for transport I). Expressed in embryos.

The protein localises to the endosome. In terms of biological role, component of the ESCRT-I complex, a regulator of vesicular trafficking process. The protein is Vacuolar protein sorting-associated protein 28 homolog (vps-28) of Caenorhabditis elegans.